The following is a 957-amino-acid chain: Glycine dehydrogenase (decarboxylating) (957 aa).

Lys-702 bears the N6-(pyridoxal phosphate)lysine mark.

It belongs to the GcvP family. As to quaternary structure, the glycine cleavage system is composed of four proteins: P, T, L and H. Pyridoxal 5'-phosphate serves as cofactor.

The catalysed reaction is N(6)-[(R)-lipoyl]-L-lysyl-[glycine-cleavage complex H protein] + glycine + H(+) = N(6)-[(R)-S(8)-aminomethyldihydrolipoyl]-L-lysyl-[glycine-cleavage complex H protein] + CO2. The glycine cleavage system catalyzes the degradation of glycine. The P protein binds the alpha-amino group of glycine through its pyridoxal phosphate cofactor; CO(2) is released and the remaining methylamine moiety is then transferred to the lipoamide cofactor of the H protein. In Synechococcus sp. (strain RCC307), this protein is Glycine dehydrogenase (decarboxylating).